The sequence spans 218 residues: UPF0502 protein CJA_1529 (218 aa).

This sequence belongs to the UPF0502 family.

In Cellvibrio japonicus (strain Ueda107) (Pseudomonas fluorescens subsp. cellulosa), this protein is UPF0502 protein CJA_1529.